We begin with the raw amino-acid sequence, 163 residues long: NADH-quinone oxidoreductase subunit I (163 aa).

2 4Fe-4S ferredoxin-type domains span residues 53-83 and 94-123; these read LRRYPNGEERCIACKLCEAICPAQAITIEAG and VRYDIDMVKCIYCGFCQEACPVDAIVEGPN. Positions 63, 66, 69, 73, 103, 106, 109, and 113 each coordinate [4Fe-4S] cluster.

Belongs to the complex I 23 kDa subunit family. In terms of assembly, NDH-1 is composed of 14 different subunits. Subunits NuoA, H, J, K, L, M, N constitute the membrane sector of the complex. [4Fe-4S] cluster is required as a cofactor.

It localises to the cell inner membrane. The catalysed reaction is a quinone + NADH + 5 H(+)(in) = a quinol + NAD(+) + 4 H(+)(out). NDH-1 shuttles electrons from NADH, via FMN and iron-sulfur (Fe-S) centers, to quinones in the respiratory chain. The immediate electron acceptor for the enzyme in this species is believed to be ubiquinone. Couples the redox reaction to proton translocation (for every two electrons transferred, four hydrogen ions are translocated across the cytoplasmic membrane), and thus conserves the redox energy in a proton gradient. This Brucella abortus (strain S19) protein is NADH-quinone oxidoreductase subunit I.